The primary structure comprises 199 residues: V-type proton ATPase subunit E (199 aa).

The protein belongs to the V-ATPase E subunit family.

Its function is as follows. Produces ATP from ADP in the presence of a proton gradient across the membrane. The chain is V-type proton ATPase subunit E from Clostridium botulinum (strain Loch Maree / Type A3).